Here is a 224-residue protein sequence, read N- to C-terminus: Claudin-17 (224 aa).

At 1–7 the chain is on the cytoplasmic side; sequence MAFYPLQ. The helical transmembrane segment at 8 to 28 threads the bilayer; sequence IAGLVLGFFGLVGTIGTTLLP. The Extracellular portion of the chain corresponds to 29-81; sequence QWRVSAFIGSNIIIFERIWEGLWMNCIQQAMVTLQCKFYNSILALPPVLEAAR. The chain crosses the membrane as a helical span at residues 82–102; it reads ALMCVAVALALVALIIGICGM. Residues 103–124 are Cytoplasmic-facing; the sequence is KQLQCTGSSERVKAYLLGTSGV. A helical membrane pass occupies residues 125 to 145; it reads LFILTGIFVLIPVSWTANIII. Residues 146–164 are Extracellular-facing; the sequence is RDFYDPTVHAGQKRELGGA. The chain crosses the membrane as a helical span at residues 165-185; that stretch reads LFLGWATAAVLFIGGGLLCGY. Residues 186 to 224 are Cytoplasmic-facing; it reads CCCNRKERWHRYPVPAYRVPQKDNQRNVTVPRKSSTSYV.

The protein belongs to the claudin family. As to quaternary structure, does not form homotypic polymeric strands and it is not sufficient to form tight junctions by its own. Interacts with OCLN. Expressed at high levels in the kidney and at mucher lower levels in the brain. In the kidney, expression gradually decreases from the proximal tubule downstream to the distal convoluted tubule. Expressed in the thin ascending limb of Henle's loop, as well as in the thick ascending limb of Henle's loop. In the distal convoluted tubules, expressed only in a few tubules. Not detected in the collecting duct. In the brain, expressed in blood vessels (at protein level).

Its subcellular location is the cell junction. The protein resides in the tight junction. It is found in the cell membrane. It carries out the reaction chloride(in) = chloride(out). The catalysed reaction is hydrogencarbonate(in) = hydrogencarbonate(out). The enzyme catalyses bromide(in) = bromide(out). It catalyses the reaction iodide(out) = iodide(in). It carries out the reaction fluoride(in) = fluoride(out). The catalysed reaction is nitrate(in) = nitrate(out). The enzyme catalyses thiocyanate(in) = thiocyanate(out). Its function is as follows. Channel-forming tight junction protein with selectivity for anions, including chloride and hydrogencarbonate, and for solutes smaller than 9 Angstrom in diameter. In the kidney proximal tubule, may be involved in quantitative reabsorption of filtered anions. Does not affect water permeability. The protein is Claudin-17 (Cldn17) of Mus musculus (Mouse).